A 955-amino-acid chain; its full sequence is Bifunctional glutamine synthetase adenylyltransferase/adenylyl-removing enzyme (955 aa).

Positions 1 to 458 (MTAQAPLSVA…QFEQTFSDKQ (458 aa)) are adenylyl removase. The tract at residues 464-955 (CAAIWHADLL…GSIDAASPTP (492 aa)) is adenylyl transferase.

The protein belongs to the GlnE family. The cofactor is Mg(2+).

It carries out the reaction [glutamine synthetase]-O(4)-(5'-adenylyl)-L-tyrosine + phosphate = [glutamine synthetase]-L-tyrosine + ADP. The enzyme catalyses [glutamine synthetase]-L-tyrosine + ATP = [glutamine synthetase]-O(4)-(5'-adenylyl)-L-tyrosine + diphosphate. Its function is as follows. Involved in the regulation of glutamine synthetase GlnA, a key enzyme in the process to assimilate ammonia. When cellular nitrogen levels are high, the C-terminal adenylyl transferase (AT) inactivates GlnA by covalent transfer of an adenylyl group from ATP to specific tyrosine residue of GlnA, thus reducing its activity. Conversely, when nitrogen levels are low, the N-terminal adenylyl removase (AR) activates GlnA by removing the adenylyl group by phosphorolysis, increasing its activity. The regulatory region of GlnE binds the signal transduction protein PII (GlnB) which indicates the nitrogen status of the cell. This is Bifunctional glutamine synthetase adenylyltransferase/adenylyl-removing enzyme from Ralstonia nicotianae (strain ATCC BAA-1114 / GMI1000) (Ralstonia solanacearum).